We begin with the raw amino-acid sequence, 37 residues long: Delta-amaurobitoxin-Pl1a (37 aa).

Cystine bridges form between Cys2–Cys18, Cys9–Cys23, Cys17–Cys33, and Cys25–Cys31. Ser37 carries the serine amide modification.

Belongs to the neurotoxin 07 (Beta/delta-agtx) family. 02 (aga-3) subfamily. Expressed by the venom gland.

Its subcellular location is the secreted. In terms of biological role, binds at site 4 of sodium channels (Nav) and inhibits the fast inactivation of cockroach channels. This toxin is active only on insects. Has a potent activity against S.litura larvae. This chain is Delta-amaurobitoxin-Pl1a, found in Pireneitega luctuosa (Tangled nest spider).